Here is a 189-residue protein sequence, read N- to C-terminus: dCTP deaminase (189 aa).

DCTP-binding positions include 112–117 (KSTYAR), 136–138 (TLE), Q157, Y171, and Q181. E138 functions as the Proton donor/acceptor in the catalytic mechanism.

Belongs to the dCTP deaminase family. As to quaternary structure, homotrimer.

It catalyses the reaction dCTP + H2O + H(+) = dUTP + NH4(+). It participates in pyrimidine metabolism; dUMP biosynthesis; dUMP from dCTP (dUTP route): step 1/2. Functionally, catalyzes the deamination of dCTP to dUTP. This is dCTP deaminase from Xanthomonas euvesicatoria pv. vesicatoria (strain 85-10) (Xanthomonas campestris pv. vesicatoria).